Consider the following 111-residue polypeptide: ATP-dependent Clp protease adapter protein ClpS (111 aa).

The protein belongs to the ClpS family. Binds to the N-terminal domain of the chaperone ClpA.

Involved in the modulation of the specificity of the ClpAP-mediated ATP-dependent protein degradation. The sequence is that of ATP-dependent Clp protease adapter protein ClpS from Legionella pneumophila (strain Corby).